The chain runs to 120 residues: NAD(P)H-quinone oxidoreductase subunit 3 (120 aa).

3 helical membrane-spanning segments follow: residues 1 to 21 (MFVL…SLVP), 64 to 84 (MFAL…PWAV), and 89 to 109 (LGLL…VALV).

Belongs to the complex I subunit 3 family. As to quaternary structure, NDH-1 can be composed of about 15 different subunits; different subcomplexes with different compositions have been identified which probably have different functions.

It localises to the cellular thylakoid membrane. The enzyme catalyses a plastoquinone + NADH + (n+1) H(+)(in) = a plastoquinol + NAD(+) + n H(+)(out). The catalysed reaction is a plastoquinone + NADPH + (n+1) H(+)(in) = a plastoquinol + NADP(+) + n H(+)(out). In terms of biological role, NDH-1 shuttles electrons from an unknown electron donor, via FMN and iron-sulfur (Fe-S) centers, to quinones in the respiratory and/or the photosynthetic chain. The immediate electron acceptor for the enzyme in this species is believed to be plastoquinone. Couples the redox reaction to proton translocation, and thus conserves the redox energy in a proton gradient. Cyanobacterial NDH-1 also plays a role in inorganic carbon-concentration. This is NAD(P)H-quinone oxidoreductase subunit 3 from Trichormus variabilis (strain ATCC 29413 / PCC 7937) (Anabaena variabilis).